Here is a 409-residue protein sequence, read N- to C-terminus: MRKNRGFSFSSKAVMMCCLAFLLIPASFAFAAPNKPFPQHTTYTSGSIKPNHVTQSAMDSSVKAKWDSWKSAYLKTAGTGKYYVKYQSNGDTVSEAHGYGMLATVIMAGYDGNAQTYFDGLYQYYKAHPSANNSKLMAWKQNSSFQNIEGADSATDGDMDIAYSLLLADKQWGSSGSINYLQAGKDIINAIMQSDVNQSQWTLRLGDWATDNTFKNATRPSDFMLNHLKAFQAATGDARWANVIDKTYTIINSLYSGYSSSTGLLPDFVVLSGSTYKPASADFLEGANDGSYDYNSCRTPWRIATDYLMTGDSRALNQLNQMNSWISAKVSGNPSNVKDGYKLNGTVTGSGGSGAFYAPFGVSAMTSSVNQNWLNSVWTKTAGSSNEGYYEDSIKLFSMIVMSGNWWTY.

The N-terminal stretch at 1–31 is a signal peptide; it reads MRKNRGFSFSSKAVMMCCLAFLLIPASFAFA. E95 serves as the catalytic Proton donor. Catalysis depends on D156, which acts as the Nucleophile.

This sequence belongs to the glycosyl hydrolase 8 (cellulase D) family.

It carries out the reaction Hydrolysis of (1-&gt;4)-beta-D-glucosidic linkages in beta-D-glucans containing (1-&gt;3)- and (1-&gt;4)-bonds.. This is Beta-glucanase (bgc) from Niallia circulans (Bacillus circulans).